Consider the following 233-residue polypeptide: Orotidine 5'-phosphate decarboxylase (233 aa).

Substrate-binding positions include aspartate 11, lysine 34, 61 to 70 (DLKLHDIPNT), threonine 117, arginine 179, glutamine 188, glycine 208, and arginine 209. Catalysis depends on lysine 63, which acts as the Proton donor.

The protein belongs to the OMP decarboxylase family. Type 1 subfamily. Homodimer.

It carries out the reaction orotidine 5'-phosphate + H(+) = UMP + CO2. Its pathway is pyrimidine metabolism; UMP biosynthesis via de novo pathway; UMP from orotate: step 2/2. Its function is as follows. Catalyzes the decarboxylation of orotidine 5'-monophosphate (OMP) to uridine 5'-monophosphate (UMP). The sequence is that of Orotidine 5'-phosphate decarboxylase from Streptococcus pneumoniae serotype 4 (strain ATCC BAA-334 / TIGR4).